Here is a 304-residue protein sequence, read N- to C-terminus: Oxygen-dependent coproporphyrinogen-III oxidase (304 aa).

S93 provides a ligand contact to substrate. A divalent metal cation is bound by residues H97 and H107. H107 (proton donor) is an active-site residue. 109-111 is a binding site for substrate; it reads NVR. A divalent metal cation-binding residues include H146 and H176. The tract at residues 241–276 is important for dimerization; sequence YVEFNLVYDRGTLFGLQSGGRTESILMSLPPQVRWG. 259-261 is a binding site for substrate; that stretch reads GGR.

It belongs to the aerobic coproporphyrinogen-III oxidase family. As to quaternary structure, homodimer. A divalent metal cation serves as cofactor.

The protein resides in the cytoplasm. It carries out the reaction coproporphyrinogen III + O2 + 2 H(+) = protoporphyrinogen IX + 2 CO2 + 2 H2O. It participates in porphyrin-containing compound metabolism; protoporphyrin-IX biosynthesis; protoporphyrinogen-IX from coproporphyrinogen-III (O2 route): step 1/1. Functionally, involved in the heme biosynthesis. Catalyzes the aerobic oxidative decarboxylation of propionate groups of rings A and B of coproporphyrinogen-III to yield the vinyl groups in protoporphyrinogen-IX. This chain is Oxygen-dependent coproporphyrinogen-III oxidase, found in Pseudomonas syringae pv. tomato (strain ATCC BAA-871 / DC3000).